We begin with the raw amino-acid sequence, 244 residues long: uncharacterized protein (244 aa).

An N-terminal signal peptide occupies residues 1–19 (MRGIFFLILILNFIGLIFS). Asparagine 45 and asparagine 77 each carry an N-linked (GlcNAc...) asparagine glycan. 2 ShKT domains span residues 67 to 105 (CNNP…CGKC) and 113 to 149 (CSDK…CNRC). 3 disulfides stabilise this stretch: cysteine 113–cysteine 149, cysteine 122–cysteine 142, and cysteine 129–cysteine 146. Asparagine 152 and asparagine 158 each carry an N-linked (GlcNAc...) asparagine glycan. ShKT domains lie at 171-205 (CTDL…CNAC) and 208-243 (CEDA…CNIC). Disulfide bonds link cysteine 171-cysteine 205, cysteine 178-cysteine 198, cysteine 185-cysteine 202, cysteine 208-cysteine 243, cysteine 215-cysteine 236, and cysteine 224-cysteine 240.

This is an uncharacterized protein from Caenorhabditis elegans.